Consider the following 254-residue polypeptide: Urease accessory protein UreF (254 aa).

Residues 1-11 (MDKGKSVKSTE) show a composition bias toward basic and acidic residues. Residues 1 to 26 (MDKGKSVKSTEKSVGMPPKTPKTDNN) form a disordered region.

The protein belongs to the UreF family. In terms of assembly, ureH, UreF and UreG form a complex that acts as a GTP-hydrolysis-dependent molecular chaperone, activating the urease apoprotein by helping to assemble the nickel containing metallocenter of UreC. The UreE protein probably delivers the nickel.

It localises to the cytoplasm. Required for maturation of urease via the functional incorporation of the urease nickel metallocenter. In Helicobacter pylori (strain ATCC 700392 / 26695) (Campylobacter pylori), this protein is Urease accessory protein UreF.